We begin with the raw amino-acid sequence, 249 residues long: Small ribosomal subunit protein uS2 (249 aa).

It belongs to the universal ribosomal protein uS2 family.

The sequence is that of Small ribosomal subunit protein uS2 from Listeria innocua serovar 6a (strain ATCC BAA-680 / CLIP 11262).